Here is a 508-residue protein sequence, read N- to C-terminus: Pentatricopeptide repeat-containing protein At3g04130, mitochondrial (508 aa).

Residues 1–74 (MSWLIQNRIG…DSEDDVFKRL (74 aa)) constitute a mitochondrion transit peptide. PPR repeat units follow at residues 120–150 (SSDA…MRGD), 154–188 (TLNT…GLEK), 189–219 (NTES…LKSH), 223–257 (NAHT…GFRP), 258–292 (CVIS…GSPP), 293–327 (NSIT…GCKP), 328–363 (DSLF…GVSI), 364–398 (NTST…NLCN), 400–434 (DVHT…HHLS), and 436–470 (DEST…DITP).

This sequence belongs to the PPR family. P subfamily.

It localises to the mitochondrion. This is Pentatricopeptide repeat-containing protein At3g04130, mitochondrial from Arabidopsis thaliana (Mouse-ear cress).